Consider the following 833-residue polypeptide: Major vault protein (833 aa).

MVP repeat units lie at residues 54 to 118 (RHYC…QLIP), 119 to 170 (PNTG…TVIY), 171 to 223 (PNTA…TMLS), 224 to 278 (DLKA…VSLS), 280 to 328 (KEYV…LVVG), 329 to 380 (KEEA…MALD), and 381 to 433 (KNEG…SIQT).

As to quaternary structure, the vault ribonucleoprotein particle is a huge (400 A x 670 A) cage structure of 12.9 MDa. It consists of a dimer of half-vaults, with each half-vault comprising 39 identical major vault protein (MVP) chains, PARP4 and one or more vault RNAs (vRNAs).

The protein resides in the cytoplasm. The protein localises to the nucleus. Required for normal vault structure. Vaults are multi-subunit structures that may act as scaffolds for proteins involved in signal transduction. Vaults may also play a role in nucleo-cytoplasmic transport. This chain is Major vault protein, found in Leishmania infantum.